Here is a 178-residue protein sequence, read N- to C-terminus: ATP synthase subunit delta (178 aa).

The protein belongs to the ATPase delta chain family. F-type ATPases have 2 components, F(1) - the catalytic core - and F(0) - the membrane proton channel. F(1) has five subunits: alpha(3), beta(3), gamma(1), delta(1), epsilon(1). F(0) has three main subunits: a(1), b(2) and c(10-14). The alpha and beta chains form an alternating ring which encloses part of the gamma chain. F(1) is attached to F(0) by a central stalk formed by the gamma and epsilon chains, while a peripheral stalk is formed by the delta and b chains.

The protein localises to the cell inner membrane. In terms of biological role, f(1)F(0) ATP synthase produces ATP from ADP in the presence of a proton or sodium gradient. F-type ATPases consist of two structural domains, F(1) containing the extramembraneous catalytic core and F(0) containing the membrane proton channel, linked together by a central stalk and a peripheral stalk. During catalysis, ATP synthesis in the catalytic domain of F(1) is coupled via a rotary mechanism of the central stalk subunits to proton translocation. Functionally, this protein is part of the stalk that links CF(0) to CF(1). It either transmits conformational changes from CF(0) to CF(1) or is implicated in proton conduction. This is ATP synthase subunit delta from Pseudomonas entomophila (strain L48).